A 293-amino-acid chain; its full sequence is Protease HtpX homolog (293 aa).

2 consecutive transmembrane segments (helical) span residues 5–25 (IFLF…TLRL) and 43–63 (ALLV…LAMS). Residue histidine 148 participates in Zn(2+) binding. Glutamate 149 is an active-site residue. Position 152 (histidine 152) interacts with Zn(2+). A run of 2 helical transmembrane segments spans residues 159–179 (VTLA…SRII) and 199–219 (FVTS…IVMW). A Zn(2+)-binding site is contributed by glutamate 225.

It belongs to the peptidase M48B family. It depends on Zn(2+) as a cofactor.

The protein localises to the cell inner membrane. This Nitrosomonas europaea (strain ATCC 19718 / CIP 103999 / KCTC 2705 / NBRC 14298) protein is Protease HtpX homolog.